We begin with the raw amino-acid sequence, 219 residues long: Protein-L-isoaspartate O-methyltransferase (219 aa).

Serine 60 is a catalytic residue.

Belongs to the methyltransferase superfamily. L-isoaspartyl/D-aspartyl protein methyltransferase family.

Its subcellular location is the cytoplasm. It catalyses the reaction [protein]-L-isoaspartate + S-adenosyl-L-methionine = [protein]-L-isoaspartate alpha-methyl ester + S-adenosyl-L-homocysteine. Catalyzes the methyl esterification of L-isoaspartyl residues in peptides and proteins that result from spontaneous decomposition of normal L-aspartyl and L-asparaginyl residues. It plays a role in the repair and/or degradation of damaged proteins. The sequence is that of Protein-L-isoaspartate O-methyltransferase from Rhodospirillum rubrum (strain ATCC 11170 / ATH 1.1.1 / DSM 467 / LMG 4362 / NCIMB 8255 / S1).